The chain runs to 811 residues: Auxin response factor 8 (811 aa).

A DNA-binding region (TF-B3) is located at residues 126–228 (FCKTLTASDT…QLFLGIRHAT (103 aa)). 2 disordered regions span residues 467–496 (HQYL…HLMH) and 544–565 (HLQQ…SDFT). 2 stretches are compositionally biased toward polar residues: residues 469-482 (YLQQ…DLML) and 544-555 (HLQQWQQQSEMP). The region spanning 705 to 789 (KNFVKVYKSG…WYIKILSPED (85 aa)) is the PB1 domain.

It belongs to the ARF family. As to quaternary structure, homodimers and heterodimers. As to expression, expressed in the whole plant.

It localises to the nucleus. Functionally, auxin response factors (ARFs) are transcriptional factors that bind specifically to the DNA sequence 5'-TGTCTC-3' found in the auxin-responsive promoter elements (AuxREs). Seems to act as transcriptional activator. Formation of heterodimers with Aux/IAA proteins may alter their ability to modulate early auxin response genes expression. Regulates both stamen and gynoecium maturation. Promotes jasmonic acid production. Partially redundant with ARF6. Involved in fruit initiation. Acts as an inhibitor to stop further carpel development in the absence of fertilization and the generation of signals required to initiate fruit and seed development. The polypeptide is Auxin response factor 8 (ARF8) (Arabidopsis thaliana (Mouse-ear cress)).